The chain runs to 833 residues: Copper-exporting P-type ATPase (833 aa).

HMA domains are found at residues 3–64 (QTID…YGAT) and 98–161 (ESQQ…YGAE). Cys-14, Cys-17, Cys-109, and Cys-112 together coordinate Cu(+). 6 helical membrane passes run 186–206 (WQAIVALAVGIPVMVWGMIGD), 217–237 (LWLAIGLITLAVMVFAGGHFY), 253–273 (TLVALGTGVAWLYSMSVNLWP), 283–303 (LYYEASAMIIGLINLGHMLEA), 437–457 (AVFVPVVVAIALFSAAIWYFF), and 463–483 (IVYTLVIATTVLIIACPCALG). Catalysis depends on Asp-522, which acts as the 4-aspartylphosphate intermediate. Mg(2+) is bound by residues Asp-719 and Asp-723. Helical transmembrane passes span 778–798 (LGAFIYNSIGIPVAAGILWPF) and 800–820 (GTLLNPVVAGAAMALSSITVV).

This sequence belongs to the cation transport ATPase (P-type) (TC 3.A.3) family. Type IB subfamily.

The protein resides in the cell inner membrane. Its subcellular location is the cytoplasm. The catalysed reaction is Cu(+)(in) + ATP + H2O = Cu(+)(out) + ADP + phosphate + H(+). Involved in Cu(+) export. Essential for copper tolerance under both aerobic and anaerobic conditions. Functionally, probably also encodes a cytoplasmic copper chaperone CopA(Z) that is produced by programmed ribosomal frameshifting. The protein is Copper-exporting P-type ATPase (copA) of Salmonella typhimurium (strain LT2 / SGSC1412 / ATCC 700720).